A 212-amino-acid polypeptide reads, in one-letter code: Ras-related protein Rab-43 (212 aa).

Residue 25-32 coordinates GTP; it reads GDASVGKT. An Effector region motif is present at residues 47-55; that stretch reads QGSTIGVDF. The residue at position 49 (serine 49) is a Phosphoserine. Position 73-77 (73-77) interacts with GTP; the sequence is DTAGQ. The residue at position 82 (threonine 82) is a Phosphothreonine; by LRRK2. Residues 131 to 134 and 163 to 164 each bind GTP; these read NKSD and AK. Serine 193 bears the Phosphoserine mark. 2 S-geranylgeranyl cysteine lipidation sites follow: cysteine 210 and cysteine 212. Cysteine 212 is subject to Cysteine methyl ester.

The protein belongs to the small GTPase superfamily. Rab family. Interacts with GDI1, GDI2, CHM and CHML; phosphorylation at Thr-82 disrupts these interactions. As to expression, widely expressed in brain, testis, lung, heart, ovary, colon, kidney, uterus and spleen but not in liver.

Its subcellular location is the cytoplasmic vesicle. The protein localises to the phagosome. It is found in the phagosome membrane. It localises to the golgi apparatus. The protein resides in the trans-Golgi network membrane. Its subcellular location is the trans-Golgi network. The small GTPases Rab are key regulators of intracellular membrane trafficking, from the formation of transport vesicles to their fusion with membranes. Rabs cycle between an inactive GDP-bound form and an active GTP-bound form that is able to recruit to membranes different set of downstream effectors directly responsible for vesicle formation, movement, tethering and fusion. The low intrinsic GTPase activity of RAB43 is activated by USP6NL. Involved in retrograde transport from the endocytic pathway to the Golgi apparatus. Involved in the transport of Shiga toxin from early and recycling endosomes to the trans-Golgi network. Required for the structural integrity of the Golgi complex. Plays a role in the maturation of phagosomes that engulf pathogens, such as S.aureus and M.tuberculosis. The protein is Ras-related protein Rab-43 (RAB43) of Homo sapiens (Human).